Here is a 553-residue protein sequence, read N- to C-terminus: Glycerol kinase 2 (553 aa).

Threonine 20 provides a ligand contact to substrate. Arginine 24 is an ATP binding site. Substrate is bound by residues arginine 94, tyrosine 148, and aspartate 259. ATP-binding positions include threonine 281, glycine 326, and 427-431 (GMTNN). The chain crosses the membrane as a helical span at residues 526 to 546 (IFSSMPLGFFIVSSMVMLIGA).

It belongs to the FGGY kinase family. In terms of assembly, interacts with ARMC12 and PLD6.

Its subcellular location is the mitochondrion outer membrane. It localises to the cytoplasm. It catalyses the reaction glycerol + ATP = sn-glycerol 3-phosphate + ADP + H(+). Its pathway is polyol metabolism; glycerol degradation via glycerol kinase pathway; sn-glycerol 3-phosphate from glycerol: step 1/1. Its function is as follows. Key enzyme in the regulation of glycerol uptake and metabolism. Essential for male fertility and sperm mitochondrial sheath formation. Required for proper arrangement of crescent-like mitochondria to form the mitochondrial sheath during spermatogenesis. Can induce mitochondrial clustering through interactions with PLD6 and up-regulation of phosphatidic acid synthesis in the mitochondria. The protein is Glycerol kinase 2 (GK2) of Macaca fascicularis (Crab-eating macaque).